A 137-amino-acid polypeptide reads, in one-letter code: MFHFFRKPPESKKPSVPETEADGFVLLGDTTDEQRMTARGKTSDIEANQPLETNKENSSSVTVSDPEMENKAGQTLENSSLMAELLSDVPFTLAPHVLAVQGTITDLPDHLLSYDGSENLSRFWYDFTLENSVLCDS.

The disordered stretch occupies residues 1 to 72; that stretch reads MFHFFRKPPE…VSDPEMENKA (72 aa). A compositionally biased stretch (basic and acidic residues) spans 32-44; the sequence is DEQRMTARGKTSD. Polar residues predominate over residues 50-63; the sequence is PLETNKENSSSVTV. The 49-residue stretch at 86-134 folds into the UMA domain; sequence LSDVPFTLAPHVLAVQGTITDLPDHLLSYDGSENLSRFWYDFTLENSVL.

The sequence is that of UBAP1-MVB12-associated (UMA)-domain containing protein 1 from Homo sapiens (Human).